The chain runs to 872 residues: Armadillo repeat-containing protein 3 (872 aa).

ARM repeat units lie at residues 15 to 54, 57 to 96, 98 to 138, 140 to 179, 181 to 220, 222 to 262, 264 to 304, 306 to 345, 346 to 385, 388 to 427, 429 to 468, and 470 to 509; these read DVFDPLMIESKKAATVVLMLNSPEEEILAKACEAIYKFAL, EENKTTLLELGAVEPLTKLLTHEDKIVRRNATMIFGILAS, NDVK…NMSA, YTSKVQIFEHGGLEPLIRLLSSPDPDVKKNSMECIYNLVQ, FQCRAKLQELNAIPPILDLLKSEYPVIQLLALKTLGVIAN, KESR…NCLE, MDTM…KAAY, PENRKLFHEQEVEKCLVALLGSENDGTKIAASQAISAMCE, NSGSKDFFNNQGIPQLIQLLKSDNEEVREAAALALANLTT, PANANAAAEADGIDPLINLLSSKRDGAIANAATVLTNMAM, EPLRLNIQNHDIMHAIISPLRSANTVVQSKAALAVTATAC, and VEARTELRNSGGLEPLVELLRSKNDEVRKHASWAVMVCAG. S-palmitoyl cysteine attachment occurs at residues cysteine 507 and cysteine 518. The segment at 610–693 is disordered; it reads VSPPSSMEDK…SKGKKEEEKV (84 aa). Residues 626–635 are compositionally biased toward low complexity; that stretch reads RSISSSSSLR. Over residues 636-646 the composition is skewed to basic residues; that stretch reads RSSKEKNKKNS. The span at 675-693 shows a compositional bias: basic and acidic residues; that stretch reads ATKEKGWRKSKGKKEEEKV.

As to quaternary structure, homodimer. Interacts with PIK3C3, PIK3R4 and BECN1. Interacts (via ARM domains) with ATG14. In terms of processing, palmitoylation is important for its function in autophagy. In terms of tissue distribution, expressed in skeletal muscle, brain, lung, kidney, prostate and testis. As to expression, mainly expressed in skeletal muscle, liver, spleen and thymus. Expressed only in the testis among normal tissues but is expressed frequently in various cancer tissues and, particularly, in pancreatic, lung and endometrial cancers.

Its function is as follows. Essential for male fertility and sperm motility. During spermatogenesis, promotes the autophagic degradation of excessive ribosomes, providing energy resources for mitochondria and thus ensuring sperm flagellar motility. This chain is Armadillo repeat-containing protein 3 (ARMC3), found in Homo sapiens (Human).